The chain runs to 338 residues: MPRAILEINSERIRHNVKKLSEFSGKKVIAVIKADAYGIGSIQMAKILEPIEEVDAFAVACVEEGVELRKMGIKKEILILGGVLKDEVPLVEEYFLTPVVSDIEHLRAIGNRDIKFHVKYDTGMGRLGFLNEVIHDPRVEGIMSHLSSPADEEFSKLQIKKFEEIVKKYTKVEKIHMESSAGVVYRVPFTTHIRVGLAMYGEKPLKNYPVDIKPALTLKAKLISVKELPENYPVSYSRTYVTKKKTKTGVVAFGYADGLMKTLSNRSYLLYKGEKLPIFGNITMDMTIVDLKNTDAKVGDWVYVVNEERTFTELAREAGTIPYELMCNLSKRIKRVVV.

Lys-33 (proton acceptor; specific for D-alanine) is an active-site residue. Lys-33 bears the N6-(pyridoxal phosphate)lysine mark. Arg-126 serves as a coordination point for substrate. The active-site Proton acceptor; specific for L-alanine is Tyr-236. Met-284 contacts substrate.

It belongs to the alanine racemase family. Pyridoxal 5'-phosphate is required as a cofactor.

It catalyses the reaction L-alanine = D-alanine. The protein operates within amino-acid biosynthesis; D-alanine biosynthesis; D-alanine from L-alanine: step 1/1. Functionally, catalyzes the interconversion of L-alanine and D-alanine. May also act on other amino acids. This is Alanine racemase (alr) from Aquifex aeolicus (strain VF5).